A 291-amino-acid polypeptide reads, in one-letter code: Protein pxr1 (291 aa).

Positions 1 to 11 are enriched in basic residues; the sequence is MGLAAPRKRTK. Disordered stretches follow at residues 1 to 26 and 146 to 268; these read MGLA…RSTD and LVPP…FRGR. Composition is skewed to polar residues over residues 15–25 and 146–156; these read DPNNTTWSRST and LVPPTSQNGQA. In terms of domain architecture, G-patch spans 25 to 79; sequence TDGFGHRILKAQGWTPGSFLGPRNAAHSDLFTTASASHIRVVLKDDNLGLGARPK. Over residues 194–205 the composition is skewed to basic and acidic residues; sequence ETNSRGSREKER. Residues 206–219 are compositionally biased toward basic residues; sequence KREKRQMRRDKKRK. A compositionally biased stretch (basic and acidic residues) spans 230 to 247; that stretch reads MQEKTRVQGPSEDVKPTE.

The protein belongs to the PINX1 family.

It is found in the nucleus. The protein resides in the nucleolus. Functionally, involved in rRNA-processing at A0, A1 and A2 sites and negatively regulates telomerase. This is Protein pxr1 (pxr1) from Aspergillus clavatus (strain ATCC 1007 / CBS 513.65 / DSM 816 / NCTC 3887 / NRRL 1 / QM 1276 / 107).